Reading from the N-terminus, the 133-residue chain is Urease subunit beta (133 aa).

The tract at residues V106–K133 is disordered.

The protein belongs to the urease beta subunit family. As to quaternary structure, heterotrimer of UreA (gamma), UreB (beta) and UreC (alpha) subunits. Three heterotrimers associate to form the active enzyme.

It is found in the cytoplasm. It catalyses the reaction urea + 2 H2O + H(+) = hydrogencarbonate + 2 NH4(+). It functions in the pathway nitrogen metabolism; urea degradation; CO(2) and NH(3) from urea (urease route): step 1/1. This is Urease subunit beta from Staphylococcus epidermidis (strain ATCC 12228 / FDA PCI 1200).